We begin with the raw amino-acid sequence, 712 residues long: Interleukin-1 receptor-associated kinase 1 (712 aa).

The Death domain maps to M27 to A106. Phosphothreonine; by PKC/PRKCI is present on T66. Residues P105–V187 are disordered. The proST region stretch occupies residues S110–N211. Over residues A115–R133 the composition is skewed to low complexity. At S131 the chain carries Phosphoserine. A Glycyl lysine isopeptide (Lys-Gly) (interchain with G-Cter in ubiquitin) cross-link involves residue K134. Residues S137–S154 are compositionally biased toward polar residues. K180 is covalently cross-linked (Glycyl lysine isopeptide (Lys-Gly) (interchain with G-Cter in ubiquitin)). T209 bears the Phosphothreonine; by IRAK4 mark. Residues F212–L521 enclose the Protein kinase domain. ATP-binding positions include I218 to V226 and K239. The active-site Proton acceptor is the D340. ATP contacts are provided by residues K342–N345 and D358. Residues S371 and S375 each carry the phosphoserine modification. T387 carries the post-translational modification Phosphothreonine. Disordered regions lie at residues S532 to S591, A613 to I660, and S690 to S712. Polar residues predominate over residues Q543–R553. S556 bears the Phosphoserine mark. Low complexity-rich tracts occupy residues Q562–A575 and E643–P658.

This sequence belongs to the protein kinase superfamily. TKL Ser/Thr protein kinase family. Pelle subfamily. Homodimer. Forms a complex with TRAF6, PELI1, IRAK4 and MYD88. Direct binding of SMAD6 to PELI1 prevents complex formation and hence negatively regulates IL1R-TLR signaling and eventually NF-kappa-B-mediated gene expression. The TRAF6-PELI1-IRAK4-MYD88 complex recruits MAP3K7/TAK1, TAB1 and TAB2 to mediate NF-kappa-B activation. Interaction with MYD88 recruits IRAK1 to the stimulated receptor complex. Interacts with TOLLIP; this interaction occurs in the cytosol prior to receptor activation. Interacts with IL1RL1. Interacts with PELI1 and TRAF6. Interacts (when polyubiquitinated) with IKBKG/NEMO. Interacts with RSAD2/viperin. Interacts with IRAK1BP1. Interacts with PELI2. Interacts with ZC3H12A; this interaction increases the interaction between ZC3H12A and IKBKB/IKKB. Interacts with IRAK4. Interacts with PELI3. Interacts with INAVA; the interaction takes place upon PRR stimulation. Interacts (via C-terminus) with NFATC4 (via N-terminus). As to quaternary structure, (Microbial infection) Interacts with mumps virus protein SH; this interaction inhibits downstream NF-kappa-B pathway activation. In terms of assembly, (Microbial infection) Interacts with alphaviruses SINV, CHIKV, RRV, VEEV and EEEV capsid proteins; the interactions lead to inhibition of IRAK1-dependent signaling. The cofactor is Mg(2+). Following recruitment on the activated receptor complex, phosphorylated on Thr-209, probably by IRAK4, resulting in a conformational change of the kinase domain, allowing further phosphorylations to take place. Thr-387 phosphorylation in the activation loop is required to achieve full enzymatic activity. In terms of processing, polyubiquitinated by TRAF6 after cell stimulation with IL-1-beta by PELI1, PELI2 and PELI3. Polyubiquitination occurs with polyubiquitin chains linked through 'Lys-63'. Ubiquitination promotes interaction with NEMO/IKBKG. Also sumoylated; leading to nuclear translocation. Isoform 1 and isoform 2 are ubiquitously expressed in all tissues examined, with isoform 1 being more strongly expressed than isoform 2.

Its subcellular location is the cytoplasm. The protein localises to the nucleus. The protein resides in the lipid droplet. It carries out the reaction L-seryl-[protein] + ATP = O-phospho-L-seryl-[protein] + ADP + H(+). The catalysed reaction is L-threonyl-[protein] + ATP = O-phospho-L-threonyl-[protein] + ADP + H(+). Its function is as follows. Serine/threonine-protein kinase that plays a critical role in initiating innate immune response against foreign pathogens. Involved in Toll-like receptor (TLR) and IL-1R signaling pathways. Is rapidly recruited by MYD88 to the receptor-signaling complex upon TLR activation. Association with MYD88 leads to IRAK1 phosphorylation by IRAK4 and subsequent autophosphorylation and kinase activation. Phosphorylates E3 ubiquitin ligases Pellino proteins (PELI1, PELI2 and PELI3) to promote pellino-mediated polyubiquitination of IRAK1. Then, the ubiquitin-binding domain of IKBKG/NEMO binds to polyubiquitinated IRAK1 bringing together the IRAK1-MAP3K7/TAK1-TRAF6 complex and the NEMO-IKKA-IKKB complex. In turn, MAP3K7/TAK1 activates IKKs (CHUK/IKKA and IKBKB/IKKB) leading to NF-kappa-B nuclear translocation and activation. Alternatively, phosphorylates TIRAP to promote its ubiquitination and subsequent degradation. Phosphorylates the interferon regulatory factor 7 (IRF7) to induce its activation and translocation to the nucleus, resulting in transcriptional activation of type I IFN genes, which drive the cell in an antiviral state. When sumoylated, translocates to the nucleus and phosphorylates STAT3. The protein is Interleukin-1 receptor-associated kinase 1 of Homo sapiens (Human).